A 203-amino-acid polypeptide reads, in one-letter code: Proteasome subunit beta 1 (203 aa).

Positions 1-7 (MTEKLKG) are cleaved as a propeptide — removed in mature form; by autocatalysis. The active-site Nucleophile is the Thr-8.

The protein belongs to the peptidase T1B family. As to quaternary structure, the 20S proteasome core is composed of 14 alpha and 14 beta subunits that assemble into four stacked heptameric rings, resulting in a barrel-shaped structure. The two inner rings, each composed of seven catalytic beta subunits, are sandwiched by two outer rings, each composed of seven alpha subunits. The catalytic chamber with the active sites is on the inside of the barrel. Has a gated structure, the ends of the cylinder being occluded by the N-termini of the alpha-subunits. Is capped at one or both ends by the proteasome regulatory ATPase, PAN.

It localises to the cytoplasm. It catalyses the reaction Cleavage of peptide bonds with very broad specificity.. With respect to regulation, the formation of the proteasomal ATPase PAN-20S proteasome complex, via the docking of the C-termini of PAN into the intersubunit pockets in the alpha-rings, triggers opening of the gate for substrate entry. Interconversion between the open-gate and close-gate conformations leads to a dynamic regulation of the 20S proteasome proteolysis activity. Functionally, component of the proteasome core, a large protease complex with broad specificity involved in protein degradation. The sequence is that of Proteasome subunit beta 1 from Thermococcus kodakarensis (strain ATCC BAA-918 / JCM 12380 / KOD1) (Pyrococcus kodakaraensis (strain KOD1)).